The following is a 264-amino-acid chain: Ubiquinone biosynthesis protein COQ4 homolog, mitochondrial (264 aa).

Residues 1-26 constitute a mitochondrion transit peptide; sequence MMQRCWQISLPLARRRLIPSLTSKRT. Residues His-169, Asp-170, His-173, and Glu-185 each coordinate Zn(2+).

The protein belongs to the COQ4 family. As to quaternary structure, component of a multi-subunit COQ enzyme complex. Requires Zn(2+) as cofactor.

The protein localises to the mitochondrion inner membrane. The catalysed reaction is a 4-hydroxy-3-methoxy-5-(all-trans-polyprenyl)benzoate + H(+) = a 2-methoxy-6-(all-trans-polyprenyl)phenol + CO2. The protein operates within cofactor biosynthesis; ubiquinone biosynthesis. In terms of biological role, lyase that catalyzes the C1-decarboxylation of 4-hydroxy-3-methoxy-5-(all-trans-polyprenyl)benzoic acid into 2-methoxy-6-(all-trans-polyprenyl)phenol during ubiquinone biosynthesis. In Drosophila grimshawi (Hawaiian fruit fly), this protein is Ubiquinone biosynthesis protein COQ4 homolog, mitochondrial.